A 346-amino-acid polypeptide reads, in one-letter code: Holliday junction branch migration complex subunit RuvB (346 aa).

The tract at residues Met-1–Tyr-182 is large ATPase domain (RuvB-L). Residues Leu-21, Arg-22, Gly-63, Lys-66, Thr-67, Thr-68, Glu-129–Phe-131, Arg-172, Tyr-182, and Arg-219 each bind ATP. Mg(2+) is bound at residue Thr-67. The tract at residues Thr-183 to Leu-253 is small ATPAse domain (RuvB-S). Residues Asn-256–Asn-346 are head domain (RuvB-H). Residues Arg-292, Arg-311, and Arg-316 each contribute to the DNA site.

It belongs to the RuvB family. As to quaternary structure, homohexamer. Forms an RuvA(8)-RuvB(12)-Holliday junction (HJ) complex. HJ DNA is sandwiched between 2 RuvA tetramers; dsDNA enters through RuvA and exits via RuvB. An RuvB hexamer assembles on each DNA strand where it exits the tetramer. Each RuvB hexamer is contacted by two RuvA subunits (via domain III) on 2 adjacent RuvB subunits; this complex drives branch migration. In the full resolvosome a probable DNA-RuvA(4)-RuvB(12)-RuvC(2) complex forms which resolves the HJ.

It localises to the cytoplasm. It catalyses the reaction ATP + H2O = ADP + phosphate + H(+). Its function is as follows. The RuvA-RuvB-RuvC complex processes Holliday junction (HJ) DNA during genetic recombination and DNA repair, while the RuvA-RuvB complex plays an important role in the rescue of blocked DNA replication forks via replication fork reversal (RFR). RuvA specifically binds to HJ cruciform DNA, conferring on it an open structure. The RuvB hexamer acts as an ATP-dependent pump, pulling dsDNA into and through the RuvAB complex. RuvB forms 2 homohexamers on either side of HJ DNA bound by 1 or 2 RuvA tetramers; 4 subunits per hexamer contact DNA at a time. Coordinated motions by a converter formed by DNA-disengaged RuvB subunits stimulates ATP hydrolysis and nucleotide exchange. Immobilization of the converter enables RuvB to convert the ATP-contained energy into a lever motion, pulling 2 nucleotides of DNA out of the RuvA tetramer per ATP hydrolyzed, thus driving DNA branch migration. The RuvB motors rotate together with the DNA substrate, which together with the progressing nucleotide cycle form the mechanistic basis for DNA recombination by continuous HJ branch migration. Branch migration allows RuvC to scan DNA until it finds its consensus sequence, where it cleaves and resolves cruciform DNA. In Rhizobium leguminosarum bv. trifolii (strain WSM2304), this protein is Holliday junction branch migration complex subunit RuvB.